The primary structure comprises 112 residues: PTS system lactose-specific EIIA component (112 aa).

In terms of domain architecture, PTS EIIA type-3 spans 6–104 (EEISMVGFAL…TRYMIRMFKR (99 aa)). The Tele-phosphohistidine intermediate role is filled by His-80. His-80 is subject to Phosphohistidine; by HPr. Asp-83 lines the Mg(2+) pocket.

In terms of assembly, homotrimer. Mg(2+) is required as a cofactor.

The protein resides in the cytoplasm. In terms of biological role, the phosphoenolpyruvate-dependent sugar phosphotransferase system (sugar PTS), a major carbohydrate active transport system, catalyzes the phosphorylation of incoming sugar substrates concomitantly with their translocation across the cell membrane. The enzyme II LacEF PTS system is involved in lactose transport. The polypeptide is PTS system lactose-specific EIIA component (Lacticaseibacillus casei (Lactobacillus casei)).